Consider the following 302-residue polypeptide: Oxygen-dependent coproporphyrinogen-III oxidase (302 aa).

Ser94 provides a ligand contact to substrate. Residues His98 and His108 each coordinate a divalent metal cation. Residue His108 is the Proton donor of the active site. 110–112 contacts substrate; the sequence is NVR. A divalent metal cation contacts are provided by His147 and His177. Residues 242 to 277 are important for dimerization; the sequence is YVEFNLVWDRGTLFGLQTGGRTESILMSMPPLVRWE. 260–262 contributes to the substrate binding site; sequence GGR.

This sequence belongs to the aerobic coproporphyrinogen-III oxidase family. In terms of assembly, homodimer. Requires a divalent metal cation as cofactor.

The protein resides in the cytoplasm. It carries out the reaction coproporphyrinogen III + O2 + 2 H(+) = protoporphyrinogen IX + 2 CO2 + 2 H2O. The protein operates within porphyrin-containing compound metabolism; protoporphyrin-IX biosynthesis; protoporphyrinogen-IX from coproporphyrinogen-III (O2 route): step 1/1. Involved in the heme biosynthesis. Catalyzes the aerobic oxidative decarboxylation of propionate groups of rings A and B of coproporphyrinogen-III to yield the vinyl groups in protoporphyrinogen-IX. In Erwinia tasmaniensis (strain DSM 17950 / CFBP 7177 / CIP 109463 / NCPPB 4357 / Et1/99), this protein is Oxygen-dependent coproporphyrinogen-III oxidase.